The following is a 173-amino-acid chain: Dual-action ribosomal maturation protein DarP (173 aa).

Belongs to the DarP family.

The protein resides in the cytoplasm. In terms of biological role, member of a network of 50S ribosomal subunit biogenesis factors which assembles along the 30S-50S interface, preventing incorrect 23S rRNA structures from forming. Promotes peptidyl transferase center (PTC) maturation. The chain is Dual-action ribosomal maturation protein DarP from Pseudomonas putida (strain GB-1).